The chain runs to 189 residues: Large ribosomal subunit protein eL18 (189 aa).

The protein belongs to the eukaryotic ribosomal protein eL18 family.

Its subcellular location is the cytoplasm. This chain is Large ribosomal subunit protein eL18 (RpL18), found in Drosophila pseudoobscura pseudoobscura (Fruit fly).